The primary structure comprises 513 residues: GMP synthase [glutamine-hydrolyzing] (513 aa).

Residues 9-198 (LILVLDFGSQ…VRRVCNCTGE (190 aa)) enclose the Glutamine amidotransferase type-1 domain. The Nucleophile role is filled by C86. Active-site residues include H172 and E174. The GMPS ATP-PPase domain occupies 199–388 (WTMENFIEIE…LGIPEHLVWR (190 aa)). 226-232 (SGGVDSS) contributes to the ATP binding site.

As to quaternary structure, homodimer.

It carries out the reaction XMP + L-glutamine + ATP + H2O = GMP + L-glutamate + AMP + diphosphate + 2 H(+). It participates in purine metabolism; GMP biosynthesis; GMP from XMP (L-Gln route): step 1/1. Its function is as follows. Catalyzes the synthesis of GMP from XMP. This is GMP synthase [glutamine-hydrolyzing] from Staphylococcus epidermidis (strain ATCC 12228 / FDA PCI 1200).